Reading from the N-terminus, the 127-residue chain is S-adenosylmethionine decarboxylase proenzyme 2 (127 aa).

S63 serves as the catalytic Schiff-base intermediate with substrate; via pyruvic acid. A Pyruvic acid (Ser); by autocatalysis modification is found at S63. H68 functions as the Proton acceptor; for processing activity in the catalytic mechanism. The active-site Proton donor; for catalytic activity is the C83.

The protein belongs to the prokaryotic AdoMetDC family. Type 1 subfamily. As to quaternary structure, heterotetramer of two alpha and two beta chains arranged as a dimer of alpha/beta heterodimers. It depends on pyruvate as a cofactor. In terms of processing, is synthesized initially as an inactive proenzyme. Formation of the active enzyme involves a self-maturation process in which the active site pyruvoyl group is generated from an internal serine residue via an autocatalytic post-translational modification. Two non-identical subunits are generated from the proenzyme in this reaction, and the pyruvate is formed at the N-terminus of the alpha chain, which is derived from the carboxyl end of the proenzyme. The post-translation cleavage follows an unusual pathway, termed non-hydrolytic serinolysis, in which the side chain hydroxyl group of the serine supplies its oxygen atom to form the C-terminus of the beta chain, while the remainder of the serine residue undergoes an oxidative deamination to produce ammonia and the pyruvoyl group blocking the N-terminus of the alpha chain.

The catalysed reaction is S-adenosyl-L-methionine + H(+) = S-adenosyl 3-(methylsulfanyl)propylamine + CO2. It functions in the pathway amine and polyamine biosynthesis; S-adenosylmethioninamine biosynthesis; S-adenosylmethioninamine from S-adenosyl-L-methionine: step 1/1. Its function is as follows. Catalyzes the decarboxylation of S-adenosylmethionine to S-adenosylmethioninamine (dcAdoMet), the propylamine donor required for the synthesis of the polyamines spermine and spermidine from the diamine putrescine. This is S-adenosylmethionine decarboxylase proenzyme 2 from Halalkalibacterium halodurans (strain ATCC BAA-125 / DSM 18197 / FERM 7344 / JCM 9153 / C-125) (Bacillus halodurans).